The sequence spans 241 residues: Urease accessory protein UreF 1 (241 aa).

It belongs to the UreF family. UreD, UreF and UreG form a complex that acts as a GTP-hydrolysis-dependent molecular chaperone, activating the urease apoprotein by helping to assemble the nickel containing metallocenter of UreC. The UreE protein probably delivers the nickel.

It localises to the cytoplasm. In terms of biological role, required for maturation of urease via the functional incorporation of the urease nickel metallocenter. The sequence is that of Urease accessory protein UreF 1 from Brucella melitensis biotype 1 (strain ATCC 23456 / CCUG 17765 / NCTC 10094 / 16M).